Reading from the N-terminus, the 595-residue chain is MALKKMPPKKPYHQKASKTKACYNCHRKRLRCDKSLPACLKCSINGEECLGYGIVLRWAACNSPTSTITTRTTNKTNFNGTNTTTPRTVKSSTPTQAPTPSDSPRQLDTDVTSSSAPSHTCSRSTTTSTTTTRISSPTLEETIDSFTVETPIDNNVDPLPRAPDDNPDPSSQIIKRPVNLIKIPLTDPLLNGLSTKARWYMHHFATIVCRDLVSIDQKERNPFRAIIPLVRKFDYLQSVVLATAAMHLSTIHKYQGRSLPSESALVDALMLKSRALHLLRAAINDNTLTDKAMILSAIVFLVNLDLIDSGRGGWKAHVGAARRLISSLYLTKAHLDGAIAPLVNAIAADCLTYRIYGSTISGNTSSWSDNTIDDGVVLPYILQNAEAYSYHCAPPAILQIILSASQLCSGSSTTLETDGGAGRIVTAAALLHKARNFDVQTWVYNIKGLPPDDDLEARVSVASAHRAAACLFVLLSVPETGLLEIPLLEPKDLVQEILGHLSCIPDNHVHLKGTVWPTFVVGAETDDLSERAWCLERLVAVWTKNPWTYPWGYVHTAMEMLQEIWRLKDLAAQQGDDGINWLQRLKATENSCLIV.

The segment at residues 22-49 (CYNCHRKRLRCDKSLPACLKCSINGEEC) is a DNA-binding region (zn(2)-C6 fungal-type). Low complexity predominate over residues 69–88 (TTRTTNKTNFNGTNTTTPRT). A disordered region spans residues 69–172 (TTRTTNKTNF…PDDNPDPSSQ (104 aa)). The span at 89–117 (VKSSTPTQAPTPSDSPRQLDTDVTSSSAP) shows a compositional bias: polar residues. Over residues 118–138 (SHTCSRSTTTSTTTTRISSPT) the composition is skewed to low complexity.

It is found in the nucleus. Probable transcriptional regulator. This Neurospora crassa (strain ATCC 24698 / 74-OR23-1A / CBS 708.71 / DSM 1257 / FGSC 987) protein is Acriflavine sensitivity control protein acr-2 (acr-2).